The chain runs to 629 residues: 5-aminolevulinate synthase, mitochondrial (629 aa).

A mitochondrion-targeting transit peptide spans 1-69; sequence MDSVLRQSKA…VQSARTGGRA (69 aa). Substrate contacts are provided by Arg-155, Ser-268, and Lys-287. Residues Ser-320, His-348, and Thr-388 each contribute to the pyridoxal 5'-phosphate site. Lys-391 is an active-site residue. At Lys-391 the chain carries N6-(pyridoxal phosphate)lysine. Pyridoxal 5'-phosphate is bound by residues Thr-420 and Thr-421. Residue Thr-506 participates in substrate binding.

Belongs to the class-II pyridoxal-phosphate-dependent aminotransferase family. In terms of assembly, homodimer. The cofactor is pyridoxal 5'-phosphate.

It localises to the mitochondrion matrix. It catalyses the reaction succinyl-CoA + glycine + H(+) = 5-aminolevulinate + CO2 + CoA. It functions in the pathway porphyrin-containing compound metabolism; protoporphyrin-IX biosynthesis; 5-aminolevulinate from glycine: step 1/1. In terms of biological role, catalyzes the synthesis of 5-aminolevulinate (ALA) from succinyl-CoA and glycine, the first and rate-limiting step in heme biosynthesis. In Neurospora crassa (strain ATCC 24698 / 74-OR23-1A / CBS 708.71 / DSM 1257 / FGSC 987), this protein is 5-aminolevulinate synthase, mitochondrial (alv-1).